A 468-amino-acid polypeptide reads, in one-letter code: Bone morphogenetic protein 3 (468 aa).

The N-terminal stretch at Met1–Gly22 is a signal peptide. Residues Gln23–Lys358 constitute a propeptide that is removed on maturation. Residues Leu29–His53 form a disordered region. 4 N-linked (GlcNAc...) asparagine glycosylation sites follow: Asn115, Asn139, Asn171, and Asn216. A disordered region spans residues Arg314 to Glu349. Residues Arg329–His339 show a composition bias toward basic residues. Residues Gln340–Glu349 are compositionally biased toward polar residues. Disulfide bonds link Cys366/Cys433, Cys395/Cys465, and Cys399/Cys467. Asn459 carries N-linked (GlcNAc...) asparagine glycosylation.

It belongs to the TGF-beta family. As to quaternary structure, homodimer; disulfide-linked.

The protein resides in the secreted. Negatively regulates bone density. Antagonizes the ability of certain osteogenic BMPs to induce osteoprogenitor differentiation and ossification. This Mus musculus (Mouse) protein is Bone morphogenetic protein 3 (Bmp3).